A 156-amino-acid chain; its full sequence is Keratin, high-sulfur matrix protein, B2B (156 aa).

The residue at position 1 (alanine 1) is an N-acetylalanine. 4 consecutive repeats follow at residues 26–35 (PTCSQTSCCQ), 36–45 (PTSIQTSCCQ), 46–55 (PISIQTSCCQ), and 56–65 (PTCLQTSGCE).

In terms of biological role, the keratin products of mammalian epidermal derivatives such as wool and hair consist of microfibrils embedded in a rigid matrix of other proteins. The matrix proteins include the high-sulfur and high-tyrosine keratins, having molecular weights of 6-20 kDa, whereas the microfibrils contain the larger, low-sulfur keratins (40-56 kDa). This chain is Keratin, high-sulfur matrix protein, B2B, found in Ovis aries (Sheep).